We begin with the raw amino-acid sequence, 216 residues long: Thymidylate kinase (216 aa).

Residue 10-17 (GIDGCGKT) coordinates ATP.

This sequence belongs to the thymidylate kinase family.

It catalyses the reaction dTMP + ATP = dTDP + ADP. Phosphorylation of dTMP to form dTDP in both de novo and salvage pathways of dTTP synthesis. The polypeptide is Thymidylate kinase (Prochlorococcus marinus (strain MIT 9303)).